The chain runs to 331 residues: Ribose-phosphate pyrophosphokinase (331 aa).

Residue 55 to 57 (DGE) coordinates ATP. Residues histidine 148 and aspartate 187 each contribute to the Mg(2+) site. Lysine 211 is a catalytic residue. D-ribose 5-phosphate contacts are provided by residues arginine 213, aspartate 237, and 241–245 (DTAGT).

Belongs to the ribose-phosphate pyrophosphokinase family. Class I subfamily. As to quaternary structure, homohexamer. The cofactor is Mg(2+).

The protein resides in the cytoplasm. The catalysed reaction is D-ribose 5-phosphate + ATP = 5-phospho-alpha-D-ribose 1-diphosphate + AMP + H(+). Its pathway is metabolic intermediate biosynthesis; 5-phospho-alpha-D-ribose 1-diphosphate biosynthesis; 5-phospho-alpha-D-ribose 1-diphosphate from D-ribose 5-phosphate (route I): step 1/1. Its function is as follows. Involved in the biosynthesis of the central metabolite phospho-alpha-D-ribosyl-1-pyrophosphate (PRPP) via the transfer of pyrophosphoryl group from ATP to 1-hydroxyl of ribose-5-phosphate (Rib-5-P). This chain is Ribose-phosphate pyrophosphokinase, found in Synechococcus elongatus (strain ATCC 33912 / PCC 7942 / FACHB-805) (Anacystis nidulans R2).